Here is a 339-residue protein sequence, read N- to C-terminus: Dicamba O-demethylase, oxygenase component (339 aa).

A Rieske domain is found at 8–110 (WYVAALPEEL…VVERDALIWI (103 aa)). [2Fe-2S] cluster-binding residues include C48, H50, C67, and H70. Residues H159 and H164 each coordinate Fe cation. 3,6-dichloro-2-methoxybenzoate-binding residues include N229, H250, and W284. Residue D293 participates in Fe cation binding.

In terms of assembly, homotrimer. The dicamba O-demethylase multicomponent enzyme system is composed of an oxygenase component (DdmC) and an electron transfer component formed by a ferredoxin reductase (DdmA) and a ferredoxin (DdmB). In vitro, dicamba O-demethylase assays in which DdmA2 is substituted for DdmA1 demonstrate that the two enzymes possess nearly identical activities. [2Fe-2S] cluster is required as a cofactor.

It catalyses the reaction 3,6-dichloro-2-methoxybenzoate + 2 reduced [2Fe-2S]-[ferredoxin] + O2 + 2 H(+) = 3,6-dichlorosalicylate + formaldehyde + 2 oxidized [2Fe-2S]-[ferredoxin] + H2O. Its activity is regulated as follows. Activity enhanced by Fe(2+) and Mg(2+) ions. In terms of biological role, component of the dicamba O-demethylase multicomponent enzyme system involved in the degradation of the herbicide dicamba. In vitro, catalyzes the O-demethylation of 2-methoxy-3,6-dichlorobenzoic acid (dicamba) to yield 3,6-dichlorosalicylic acid (DCSA) via an exocyclic monooxygenation. The sequence is that of Dicamba O-demethylase, oxygenase component from Stenotrophomonas maltophilia (Pseudomonas maltophilia).